The primary structure comprises 254 residues: Low affinity immunoglobulin gamma Fc region receptor III-A (254 aa).

A signal peptide spans 1-16 (MWQLLLPTALLLLVSA). The Extracellular segment spans residues 17–208 (GMRTEDLPKA…ISSFFPPGYQ (192 aa)). Ig-like C2-type domains follow at residues 24–105 (PKAV…LEVH) and 107–189 (GWLL…VNIT). Cysteines 47 and 89 form a disulfide. N56, N63, and N92 each carry an N-linked (GlcNAc...) asparagine glycan. C128 and C172 are oxidised to a cystine. N-linked (GlcNAc...) asparagine glycans are attached at residues N180 and N187. The chain crosses the membrane as a helical span at residues 209 to 229 (VSFCLVMVLLFAVDTGLYFSV). At 230 to 254 (KTNIRSSTRDWKDHKFKWRKDPQDK) the chain is on the cytoplasmic side. S236 is subject to Phosphoserine; by PKC. T237 carries the phosphothreonine; by PKC modification.

Forms a heterooligomeric complex with ITAM-containing signaling subunits, either a homodimer of CD247, a homodimer of FCER1G or a heterodimer of CD247 and FCER1G. Interacts (via transmembrane domain) with signaling subunits; this interaction is a prerequisite for receptor complex expression on the cell surface and intracellular signal transduction. Binds the Fc region of antigen-complexed IgG with a preference for IgG1 and IgG3 isotypes. Interacts with CD2; this interaction is involved in NK cell activation and cytotoxicity. Interacts with S100A4; this interaction inhibits PKC-dependent phosphorylation of FCGR3A. In terms of processing, glycosylated. Contains high mannose- and complex-type oligosaccharides. Glycosylation at Asn-180 is mandatory for high affinity binding to the Fc and for discrimination between fucosylated and afucosylated IgG glycoforms. Post-translationally, undergoes rapid ectodomain shedding upon NK cell stimulation. The soluble form is produced by a proteolytic cleavage mediated by ADAM17. Repeated stimulation causes receptor shedding, a mechanism that allows for increased NK cell motility and detachment from opsonized target cells while avoiding activation-induced NK cell apoptosis. Phosphorylated at RSSTR motif by PKC. The relevant physiological PKCs might be PRKCI, PRKCG, PRKCE, PRKCH and PRKCQ. Expressed in natural killer cells (at protein level). Expressed in a subset of circulating monocytes (at protein level).

The protein resides in the cell membrane. It is found in the secreted. Functionally, receptor for the invariable Fc fragment of immunoglobulin gamma (IgG). Optimally activated upon binding of clustered antigen-IgG complexes displayed on cell surfaces, triggers lysis of antibody-coated cells, a process known as antibody-dependent cellular cytotoxicity (ADCC). Does not bind free monomeric IgG, thus avoiding inappropriate effector cell activation in the absence of antigenic trigger. Mediates IgG effector functions on natural killer (NK) cells. Binds antigen-IgG complexes generated upon infection and triggers NK cell-dependent cytokine production and degranulation to limit viral load and propagation. Involved in the generation of memory-like adaptive NK cells capable to produce high amounts of IFNG and to efficiently eliminate virus-infected cells via ADCC. Regulates NK cell survival and proliferation, in particular by preventing NK cell progenitor apoptosis. Fc-binding subunit that associates with CD247 and/or FCER1G adapters to form functional signaling complexes. Following the engagement of antigen-IgG complexes, triggers phosphorylation of immunoreceptor tyrosine-based activation motif (ITAM)-containing adapters with subsequent activation of phosphatidylinositol 3-kinase signaling and sustained elevation of intracellular calcium that ultimately drive NK cell activation. The ITAM-dependent signaling coupled to receptor phosphorylation by PKC mediates robust intracellular calcium flux that leads to production of pro-inflammatory cytokines, whereas in the absence of receptor phosphorylation it mainly activates phosphatidylinositol 3-kinase signaling leading to cell degranulation. Costimulates NK cells and trigger lysis of target cells independently of IgG binding. Mediates the antitumor activities of therapeutic antibodies. Upon ligation on monocytes triggers TNFA-dependent ADCC of IgG-coated tumor cells. Mediates enhanced ADCC in response to afucosylated IgGs. (Microbial infection) Involved in Dengue virus pathogenesis via antibody-dependent enhancement (ADE) mechanism. Secondary infection with Dengue virus triggers elevated levels of afucosylated non-neutralizing IgG1s with reactivity to viral envelope/E protein. Viral antigen-IgG1 complexes bind with high affinity to FCGR3A, facilitating virus entry in myeloid cells and subsequent viral replication. The protein is Low affinity immunoglobulin gamma Fc region receptor III-A of Homo sapiens (Human).